The primary structure comprises 106 residues: Ig kappa-b4 chain C region (106 aa).

Residues 6–99 (PSVLLFPPSK…VQGSASPIVQ (94 aa)) enclose the Ig-like domain. Cysteine 27 and cysteine 87 form a disulfide bridge. Residues 48–64 (QQSGIENSKTPQSPEDN) show a composition bias toward polar residues. Positions 48–67 (QQSGIENSKTPQSPEDNTYS) are disordered.

The polypeptide is Ig kappa-b4 chain C region (K-BAS) (Oryctolagus cuniculus (Rabbit)).